The following is a 217-amino-acid chain: Large ribosomal subunit protein uL1 (217 aa).

Belongs to the universal ribosomal protein uL1 family.

This is Large ribosomal subunit protein uL1 (RpL10A) from Spodoptera frugiperda (Fall armyworm).